A 344-amino-acid chain; its full sequence is MRMDERKQKVLAAVIQDYILTGEPVGSRTIARRYNLGVSPATIRNEMADLEEMGLLEQPHTSAGRIPSDQGYRYYVDCLMPPAHLTPEEEEYVRRRYNQKMLEIEQVLAETTRLISEMTSYAAIALGPDQGRASLEEVQVLPIQVANKALLVAVTSTGVVEHRVLTIPEGVTPEDLNRISRVLNARLQGRALEDLRQMVLSDIYQELAQHRNLVNLVRDLLQQLLSLESGERVYRNGTLNILNQPEFKDLDRVREILSFLDQDEALRRIFMTTPSTGLTIRIGQENKIEGIDKCSVVTISYAVEGKIMGKVGLLGPTRMQYSRAISVLRCVADALSQTLEQLYR.

Belongs to the HrcA family.

Negative regulator of class I heat shock genes (grpE-dnaK-dnaJ and groELS operons). Prevents heat-shock induction of these operons. This Moorella thermoacetica (strain ATCC 39073 / JCM 9320) protein is Heat-inducible transcription repressor HrcA.